Consider the following 479-residue polypeptide: Protein ORD (479 aa).

The interval 102 to 140 (KEEETEPESESDLDEGPSTSKQALERMVQRAERKAKEAS) is disordered. Residues 104–116 (EETEPESESDLDE) show a composition bias toward acidic residues. A compositionally biased stretch (basic and acidic residues) spans 124–140 (ALERMVQRAERKAKEAS).

In terms of assembly, interacts with Sce.

The protein localises to the nucleus. The protein resides in the chromosome. Its subcellular location is the centromere. Essential for proper maintenance of sister-chromatid cohesion in both male and female meiosis. Mutations in ord cause premature separation of the sister chromatids in meiosis I and random segregation in both meiotic divisions. Required for chiasma maintenance in female meiosis. Mutations in ord reduce recombination in female meiosis. The protein is Protein ORD (ord) of Drosophila melanogaster (Fruit fly).